The following is a 251-amino-acid chain: 3-deoxy-manno-octulosonate cytidylyltransferase (251 aa).

It belongs to the KdsB family.

It localises to the cytoplasm. The enzyme catalyses 3-deoxy-alpha-D-manno-oct-2-ulosonate + CTP = CMP-3-deoxy-beta-D-manno-octulosonate + diphosphate. It functions in the pathway nucleotide-sugar biosynthesis; CMP-3-deoxy-D-manno-octulosonate biosynthesis; CMP-3-deoxy-D-manno-octulosonate from 3-deoxy-D-manno-octulosonate and CTP: step 1/1. Its pathway is bacterial outer membrane biogenesis; lipopolysaccharide biosynthesis. Activates KDO (a required 8-carbon sugar) for incorporation into bacterial lipopolysaccharide in Gram-negative bacteria. The chain is 3-deoxy-manno-octulosonate cytidylyltransferase from Vibrio vulnificus (strain YJ016).